A 58-amino-acid polypeptide reads, in one-letter code: Metallothionein-2B (58 aa).

A beta region spans residues 1 to 29 (MPDPCCNDKCECKEGECKTGCKCKSCRCP). Residues cysteine 5, cysteine 6, cysteine 10, cysteine 12, cysteine 17, cysteine 21, cysteine 23, cysteine 26, cysteine 28, cysteine 31, cysteine 34, cysteine 38, cysteine 40, cysteine 46, cysteine 50, cysteine 54, cysteine 56, and cysteine 57 each contribute to the a divalent metal cation site. Residues 30–58 (PCDKCSSECKCTSKEECSKTCSKPCSCCP) are alpha.

It belongs to the metallothionein superfamily. Type 3 family.

In terms of biological role, binds six divalent metal ions. Known to bind copper and cadmium. The protein is Metallothionein-2B of Callinectes sapidus (Blue crab).